The primary structure comprises 243 residues: Venom nerve growth factor 1 (243 aa).

Positions 1-18 are cleaved as a signal peptide; the sequence is MSMLCYTLIIAFLIGIWA. Residues 19–125 constitute a propeptide that is removed on maturation; sequence VPKSEDNAPL…ALNRNIRAKR (107 aa). Cystine bridges form between C139/C204, C182/C232, and C192/C234. Residue N148 is glycosylated (N-linked (GlcNAc...) asparagine).

Belongs to the NGF-beta family. As to quaternary structure, homodimer; non-covalently linked. As to expression, expressed by the venom gland.

Its subcellular location is the secreted. Functionally, nerve growth factor is important for the development and maintenance of the sympathetic and sensory nervous systems. It stimulates division and differentiation of sympathetic and embryonic sensory neurons as well as basal forebrain cholinergic neurons in the brain. Its relevance in the snake venom is not clear. However, it has been shown to inhibit metalloproteinase-dependent proteolysis of platelet glycoprotein Ib alpha, suggesting a metalloproteinase inhibition to prevent metalloprotease autodigestion and/or protection against prey proteases. Binds a lipid between the two protein chains in the homodimer. The lipid-bound form promotes histamine relase from mouse mast cells, contrary to the lipid-free form. The chain is Venom nerve growth factor 1 from Naja sputatrix (Malayan spitting cobra).